A 369-amino-acid chain; its full sequence is UDP-3-O-acylglucosamine N-acyltransferase (369 aa).

The active-site Proton acceptor is the His-252. Positions 348 to 369 are disordered; it reads ERRQRGENNAPAQNKQDEEKSS.

Belongs to the transferase hexapeptide repeat family. LpxD subfamily. As to quaternary structure, homotrimer.

The catalysed reaction is a UDP-3-O-[(3R)-3-hydroxyacyl]-alpha-D-glucosamine + a (3R)-hydroxyacyl-[ACP] = a UDP-2-N,3-O-bis[(3R)-3-hydroxyacyl]-alpha-D-glucosamine + holo-[ACP] + H(+). It participates in bacterial outer membrane biogenesis; LPS lipid A biosynthesis. Functionally, catalyzes the N-acylation of UDP-3-O-acylglucosamine using 3-hydroxyacyl-ACP as the acyl donor. Is involved in the biosynthesis of lipid A, a phosphorylated glycolipid that anchors the lipopolysaccharide to the outer membrane of the cell. The polypeptide is UDP-3-O-acylglucosamine N-acyltransferase (Cupriavidus metallidurans (strain ATCC 43123 / DSM 2839 / NBRC 102507 / CH34) (Ralstonia metallidurans)).